A 233-amino-acid chain; its full sequence is Glucosamine-6-phosphate deaminase (233 aa).

Residue Asp62 is the Proton acceptor; for enolization step of the active site. The active-site For ring-opening step is Asn128. The active-site Proton acceptor; for ring-opening step is His130. Residue Glu135 is the For ring-opening step of the active site.

Belongs to the glucosamine/galactosamine-6-phosphate isomerase family. NagB subfamily.

It carries out the reaction alpha-D-glucosamine 6-phosphate + H2O = beta-D-fructose 6-phosphate + NH4(+). It participates in amino-sugar metabolism; N-acetylneuraminate degradation; D-fructose 6-phosphate from N-acetylneuraminate: step 5/5. In terms of biological role, catalyzes the reversible isomerization-deamination of glucosamine 6-phosphate (GlcN6P) to form fructose 6-phosphate (Fru6P) and ammonium ion. The chain is Glucosamine-6-phosphate deaminase from Streptococcus thermophilus (strain ATCC BAA-491 / LMD-9).